A 171-amino-acid polypeptide reads, in one-letter code: MEKLPKKRVSKTKSQKLINSLTTQKNRAFLKKISASEMLLELEKGAFKKNEAYFISDEEDKNYVLVPDNVISLLAENARKAFEARLRAELERDIITQAPIDFEDVREVSLQLLENLRQKDGNLPNINTLNFVKQIKKEHPNLFFNFDNMFKQPPFNENNFENFDNSDEENF.

The protein belongs to the UPF0763 family.

In Helicobacter pylori (strain Shi470), this protein is UPF0763 protein HPSH_03535.